The sequence spans 203 residues: Probable flagellin 1 (203 aa).

Residues Met-1 to Gly-6 constitute a propeptide that is removed on maturation.

The protein belongs to the archaeal flagellin family.

It is found in the archaeal flagellum. Flagellin is the subunit protein which polymerizes to form the filaments of archaeal flagella. In Aeropyrum pernix (strain ATCC 700893 / DSM 11879 / JCM 9820 / NBRC 100138 / K1), this protein is Probable flagellin 1 (flaB1).